A 339-amino-acid polypeptide reads, in one-letter code: Anthranilate phosphoribosyltransferase (339 aa).

Residues Gly81, 84-85 (GD), Ser89, 91-94 (NVSS), 109-117 (KHGNRALSS), and Ala121 contribute to the 5-phospho-alpha-D-ribose 1-diphosphate site. Position 81 (Gly81) interacts with anthranilate. Ser93 contributes to the Mg(2+) binding site. Asn112 serves as a coordination point for anthranilate. An anthranilate-binding site is contributed by Arg167. Mg(2+) is bound by residues Asp225 and Glu226.

Belongs to the anthranilate phosphoribosyltransferase family. As to quaternary structure, homodimer. Mg(2+) serves as cofactor.

The enzyme catalyses N-(5-phospho-beta-D-ribosyl)anthranilate + diphosphate = 5-phospho-alpha-D-ribose 1-diphosphate + anthranilate. The protein operates within amino-acid biosynthesis; L-tryptophan biosynthesis; L-tryptophan from chorismate: step 2/5. Its function is as follows. Catalyzes the transfer of the phosphoribosyl group of 5-phosphorylribose-1-pyrophosphate (PRPP) to anthranilate to yield N-(5'-phosphoribosyl)-anthranilate (PRA). The sequence is that of Anthranilate phosphoribosyltransferase from Brucella suis biovar 1 (strain 1330).